A 276-amino-acid polypeptide reads, in one-letter code: uncharacterized protein (276 aa).

An N-terminal signal peptide occupies residues 1–25; sequence MNKKRLLPKASLGALFMLFGTALTA. Cys26 is lipidated: N-palmitoyl cysteine. Cys26 is lipidated: S-diacylglycerol cysteine.

It belongs to the MG439/MG440 family.

It localises to the cell membrane. This is an uncharacterized protein from Mycoplasma pneumoniae (strain ATCC 29342 / M129 / Subtype 1) (Mycoplasmoides pneumoniae).